Reading from the N-terminus, the 190-residue chain is Potassium-transporting ATPase KdpC subunit (190 aa).

Residues 10-30 (TFLFLLLITGGVYPLLTTALG) traverse the membrane as a helical segment.

Belongs to the KdpC family. The system is composed of three essential subunits: KdpA, KdpB and KdpC.

It is found in the cell inner membrane. Its function is as follows. Part of the high-affinity ATP-driven potassium transport (or Kdp) system, which catalyzes the hydrolysis of ATP coupled with the electrogenic transport of potassium into the cytoplasm. This subunit acts as a catalytic chaperone that increases the ATP-binding affinity of the ATP-hydrolyzing subunit KdpB by the formation of a transient KdpB/KdpC/ATP ternary complex. The sequence is that of Potassium-transporting ATPase KdpC subunit from Escherichia coli O81 (strain ED1a).